A 314-amino-acid chain; its full sequence is MDVGNKSTMSEFVLLGLSNSWELQMFFFMVFSLLYVATMVGNSLIVITVIVDPHLHSPMYFLLTNLSIIDMSLASFATPKMITDYLTGHKTISFDGCLTQIFFLHLFTGTEIILLMAMSFDRYIAICKPLHYASVISPQVCVALVVASWIMGVMHSMSQVIFALTLPFCGPYEVDSFFCDLPVVFQLACVDTYVLGLFMISTSGIIALSCFIVLFNSYVIVLVTVKHHSSRGSSKALSTCTAHFIVVFLFFGPCIFIYMWPLSSFLTDKILSVFYTIFTPTLNPIIYTLRNQEVKIAMRKLKNRFLNFNKAMPS.

The Extracellular segment spans residues 1–25 (MDVGNKSTMSEFVLLGLSNSWELQM). Asn5 carries N-linked (GlcNAc...) asparagine glycosylation. Residues 26-49 (FFFMVFSLLYVATMVGNSLIVITV) form a helical membrane-spanning segment. Topologically, residues 50–57 (IVDPHLHS) are cytoplasmic. The chain crosses the membrane as a helical span at residues 58 to 79 (PMYFLLTNLSIIDMSLASFATP). Topologically, residues 80-100 (KMITDYLTGHKTISFDGCLTQ) are extracellular. Cysteines 97 and 189 form a disulfide. Residues 101–120 (IFFLHLFTGTEIILLMAMSF) form a helical membrane-spanning segment. At 121–139 (DRYIAICKPLHYASVISPQ) the chain is on the cytoplasmic side. Residues 140 to 158 (VCVALVVASWIMGVMHSMS) traverse the membrane as a helical segment. Residues 159 to 195 (QVIFALTLPFCGPYEVDSFFCDLPVVFQLACVDTYVL) are Extracellular-facing. The helical transmembrane segment at 196–219 (GLFMISTSGIIALSCFIVLFNSYV) threads the bilayer. Over 220–235 (IVLVTVKHHSSRGSSK) the chain is Cytoplasmic. A helical transmembrane segment spans residues 236–258 (ALSTCTAHFIVVFLFFGPCIFIY). Residues 259-269 (MWPLSSFLTDK) lie on the Extracellular side of the membrane. The chain crosses the membrane as a helical span at residues 270–289 (ILSVFYTIFTPTLNPIIYTL). Topologically, residues 290–314 (RNQEVKIAMRKLKNRFLNFNKAMPS) are cytoplasmic.

It belongs to the G-protein coupled receptor 1 family.

The protein localises to the cell membrane. Functionally, odorant receptor. This is Olfactory receptor 4K2 (OR4K2) from Homo sapiens (Human).